Consider the following 425-residue polypeptide: Serine--tRNA ligase (425 aa).

Residue 231-233 (TAE) participates in L-serine binding. 262–264 (RRE) is an ATP binding site. Glutamate 285 lines the L-serine pocket. ATP is bound at residue 349 to 352 (EISS). Serine 385 is an L-serine binding site.

This sequence belongs to the class-II aminoacyl-tRNA synthetase family. Type-1 seryl-tRNA synthetase subfamily. In terms of assembly, homodimer. The tRNA molecule binds across the dimer.

The protein resides in the cytoplasm. It carries out the reaction tRNA(Ser) + L-serine + ATP = L-seryl-tRNA(Ser) + AMP + diphosphate + H(+). The catalysed reaction is tRNA(Sec) + L-serine + ATP = L-seryl-tRNA(Sec) + AMP + diphosphate + H(+). It functions in the pathway aminoacyl-tRNA biosynthesis; selenocysteinyl-tRNA(Sec) biosynthesis; L-seryl-tRNA(Sec) from L-serine and tRNA(Sec): step 1/1. In terms of biological role, catalyzes the attachment of serine to tRNA(Ser). Is also able to aminoacylate tRNA(Sec) with serine, to form the misacylated tRNA L-seryl-tRNA(Sec), which will be further converted into selenocysteinyl-tRNA(Sec). This is Serine--tRNA ligase from Aquifex aeolicus (strain VF5).